Consider the following 935-residue polypeptide: Peptidyl-glycine alpha-amidating monooxygenase A (935 aa).

Residues 1–36 (MASLSSSFLVLFLLFQNSCYCFRSPLSVFKRYEEST) form the signal peptide. Positions 1 to 390 (MASLSSSFLV…KREEEEVLDQ (390 aa)) are peptidylglycine alpha-hydroxylating monooxygenase. Residues 37–825 (RSLSNDCLGT…VQESSAGVSF (789 aa)) lie on the Intragranular side of the membrane. 5 cysteine pairs are disulfide-bonded: Cys-43–Cys-182, Cys-77–Cys-122, Cys-110–Cys-127, Cys-223–Cys-330, and Cys-289–Cys-311. The Cu(2+) site is built by His-103 and His-104. Cu(2+) is bound by residues His-168, His-238, His-240, and Met-310. The tract at residues 362–385 (HGHHHTEAEPEKNTGLQQPKREEE) is disordered. Positions 391–712 (DVHLEEDTDW…SPSKAEHRSV (322 aa)) are peptidyl-alpha-hydroxyglycine alpha-amidating lyase. An a protein-binding site is contributed by Arg-426. NHL repeat units follow at residues 463–504 (SKVL…LGAG), 512–557 (LGRA…FSPN), and 565–609 (GEET…FHAE). 2 disulfides stabilise this stretch: Cys-526/Cys-547 and Cys-594/Cys-605. 2 residues coordinate a protein: Tyr-546 and Arg-598. An N-linked (GlcNAc...) asparagine glycan is attached at Asn-658. Residues 662 to 705 (GDILDTFIPARKNFDMPHDIAAADDGTVYVGDAHANAVWKFSPS) form an NHL 4 repeat. The segment covering 728 to 751 (FETHIRSRPKTNESVEKQTQEKQQ) has biased composition (basic and acidic residues). 2 disordered regions span residues 728–764 (FETH…TQEK) and 778–812 (QEKQ…TQEK). Asn-739 carries N-linked (GlcNAc...) asparagine glycosylation. Positions 755–764 (NSAGVSTQEK) are enriched in polar residues. Residues 826 to 846 (VLIITLLIIPIAVLIAIAIFI) traverse the membrane as a helical segment. The Cytoplasmic segment spans residues 847-935 (RWRKVRMYGG…PIPPAPVSSS (89 aa)). The segment at 896–935 (KGFDRLSTEGSDQEKDDDDGSDSEEEYSAPPIPPAPVSSS) is disordered. Over residues 909–922 (EKDDDDGSDSEEEY) the composition is skewed to acidic residues. The segment covering 925–935 (PPIPPAPVSSS) has biased composition (pro residues).

It in the C-terminal section; belongs to the peptidyl-alpha-hydroxyglycine alpha-amidating lyase family. In the N-terminal section; belongs to the copper type II ascorbate-dependent monooxygenase family. Monomer. Requires Zn(2+) as cofactor. It depends on Cu(2+) as a cofactor.

The protein resides in the cytoplasmic vesicle. Its subcellular location is the secretory vesicle membrane. It catalyses the reaction a [peptide]-C-terminal glycine + 2 L-ascorbate + O2 = a [peptide]-C-terminal (2S)-2-hydroxyglycine + 2 monodehydro-L-ascorbate radical + H2O. It carries out the reaction a [peptide]-C-terminal (2S)-2-hydroxyglycine = a [peptide]-C-terminal amide + glyoxylate. Its function is as follows. Bifunctional enzyme that catalyzes amidation of the C-terminus of proteins. Alpha-amidation is present at the C-terminus of many endocrine hormones and neuropeptides and is required for their activity. C-terminal amidation also takes place in response to protein fragmentation triggered by oxidative stress, promoting degradation of amidated protein fragments by the proteasome. Alpha-amidation involves two sequential reactions, both of which are catalyzed by separate catalytic domains of the enzyme. The first step, catalyzed by peptidyl alpha-hydroxylating monooxygenase (PHM) domain, is the copper-, ascorbate-, and O2- dependent stereospecific hydroxylation (with S stereochemistry) at the alpha-carbon (C-alpha) of the C-terminal glycine of the peptidylglycine substrate. The second step, catalyzed by the peptidylglycine amidoglycolate lyase (PAL) domain, is the zinc-dependent cleavage of the N-C-alpha bond, producing the alpha-amidated peptide and glyoxylate. The sequence is that of Peptidyl-glycine alpha-amidating monooxygenase A (pam-a) from Xenopus laevis (African clawed frog).